We begin with the raw amino-acid sequence, 253 residues long: MQPETSDQMLYSFLAGNEVGGGGYCVSGDYMTTMQSLCGSSSSTSSYYPLAISGIGETMAQDRALAALRNHKEAERRRRERINSHLNKLRNVLSCNSKTDKATLLAKVVQRVRELKQQTLETSDSDQTLLPSETDEISVLHFGDYSNDGHIIFKASLCCEDRSDLLPDLMEILKSLNMKTLRAEMVTIGGRTRSVLVVAADKEMHGVESVHFLQNALKSLLERSSKSLMERSSGGGGGERSKRRRALDHIIMV.

Residues 66-115 form the bHLH domain; sequence AALRNHKEAERRRRERINSHLNKLRNVLSCNSKTDKATLLAKVVQRVREL.

In terms of assembly, homodimer.

It is found in the nucleus. In Arabidopsis thaliana (Mouse-ear cress), this protein is Transcription factor bHLH106 (BHLH106).